Here is a 182-residue protein sequence, read N- to C-terminus: uncharacterized protein (182 aa).

This sequence belongs to the mimivirus L6/L7/L57 family.

This is an uncharacterized protein from Acanthamoeba polyphaga mimivirus (APMV).